Consider the following 66-residue polypeptide: Delta-buthitoxin-Hj1a (66 aa).

The LCN-type CS-alpha/beta domain maps to 4–66 (RDAYIAQPHN…EPIKVPGKCH (63 aa)). Cystine bridges form between C14/C65, C18/C38, C24/C48, and C28/C50.

This sequence belongs to the long (4 C-C) scorpion toxin superfamily. Sodium channel inhibitor family. Alpha subfamily. As to expression, expressed by the venom gland.

The protein resides in the secreted. In terms of biological role, this recombinant toxin slows fast inactivation on Nav1.1/SCN1A (EC(50)=17 nM), Nav1.4/SN4A (EC(50)=7.5 nM), Nav1.5/SCN5A (EC(50)=9.2 nM) and Nav1.6/SCN8A (EC(50)=37.3 nM) voltage-gated sodium channels. On Nav1.1/SCN1A channel, it acts as an agonist by inducing a shift in both the voltage dependence of channel inactivation (alpha-toxin activity) and activation (beta-toxin activity). In vivo, shows moderate insecticidal activities. It induces irreversible paralysis in blowflies and lethal effects in D.melanogaster. In Hottentotta judaicus (Black scorpion), this protein is Delta-buthitoxin-Hj1a.